We begin with the raw amino-acid sequence, 172 residues long: Adenine phosphoribosyltransferase (172 aa).

The protein belongs to the purine/pyrimidine phosphoribosyltransferase family. Homodimer.

It is found in the cytoplasm. It carries out the reaction AMP + diphosphate = 5-phospho-alpha-D-ribose 1-diphosphate + adenine. It participates in purine metabolism; AMP biosynthesis via salvage pathway; AMP from adenine: step 1/1. Catalyzes a salvage reaction resulting in the formation of AMP, that is energically less costly than de novo synthesis. This chain is Adenine phosphoribosyltransferase, found in Clostridium botulinum (strain Alaska E43 / Type E3).